An 811-amino-acid chain; its full sequence is Protein MEI2-like 5 (811 aa).

RRM domains follow at residues 193 to 266 and 278 to 351; these read RTLF…YSIP and GTLV…PSRP. The interval 371–397 is disordered; the sequence is TKHNSFQIGSPSANSPPSLWSQLGSPT. The span at 374–397 shows a compositional bias: polar residues; that stretch reads NSFQIGSPSANSPPSLWSQLGSPT.

In terms of biological role, probable RNA-binding protein that may play a role in growth regulation. The chain is Protein MEI2-like 5 (ML5) from Oryza sativa subsp. japonica (Rice).